A 147-amino-acid chain; its full sequence is Zinc finger HIT domain-containing protein 3 (147 aa).

Positions 3, 6, 14, 17, 22, 26, 30, and 34 each coordinate Zn(2+). An HIT-type zinc finger spans residues 3–34 (CVICLEKPKYRCPACRVPYCSVACFRKHKEQC). The segment at 45–67 (IRSALPTKTXKPVENKDDDDSIA) is disordered. Ser72 bears the Phosphoserine mark.

Thyroid receptor interacting proteins (TRIPs) specifically interact with the ligand binding domain of the thyroid receptor (TR). Requires the presence of thyroid hormone for its interaction. Interacts with NUFIP1. Interacts (via HIT-type zinc finger) with the RUVBL1/RUVBL2 complex in the presence of ADP.

It is found in the cytoplasm. It localises to the nucleus. This Macaca mulatta (Rhesus macaque) protein is Zinc finger HIT domain-containing protein 3 (ZNHIT3).